The sequence spans 335 residues: Homeobox protein unc-39 (335 aa).

2 disordered regions span residues 27 to 56 and 269 to 294; these read FTSSSNSNTSNSSTSPSHISDQFSSSGGPP and RRQRDKSNNSAKCSPPSSSSSTNGGS. Residues 28–41 show a composition bias toward low complexity; that stretch reads TSSSNSNTSNSSTS. Residues 42 to 53 are compositionally biased toward polar residues; it reads PSHISDQFSSSG. A DNA-binding region (homeobox) is located at residues 225–277; it reads KDSSRKFLKQFFRNVSEYPTQEQKREISRATGLKIVQISNWFKNRRQRDKSNN. A compositionally biased stretch (low complexity) spans 276–294; it reads NNSAKCSPPSSSSSTNGGS.

This sequence belongs to the SIX/Sine oculis homeobox family.

It localises to the nucleus. Probable transcription factor required for differentiation and migration of neuronal cells, such as RID and CAN neurons. Specifically, plays a role in the terminal differentiation of RID peptidergic neurons. Also required for CAN neuron axon guidance. This Caenorhabditis elegans protein is Homeobox protein unc-39.